Consider the following 1061-residue polypeptide: Ribonuclease 3 (1061 aa).

Disordered stretches follow at residues 1-20 (MDFTEIHKRSRRKKFQQIHQ) and 149-244 (PLHS…SYNE). Basic and acidic residues predominate over residues 156–173 (KTPERKENEEDSDSEIRS). 2 RNase III domains span residues 586–759 (LSVF…LDSG) and 811–935 (FHRL…VDKG). Glutamate 851, aspartate 921, and glutamate 924 together coordinate Mg(2+). The region spanning 962 to 1037 (DAKSHLQQWC…AENALAALEK (76 aa)) is the DRBM domain.

Belongs to the ribonuclease III family. It depends on Mg(2+) as a cofactor. The cofactor is Mn(2+).

The protein resides in the nucleus. The catalysed reaction is Endonucleolytic cleavage to 5'-phosphomonoester.. In terms of biological role, executes the initial step of microRNA (miRNA) processing in the nucleus, that is the cleavage of pri-miRNA to release pre-miRNA. Involved in pre-rRNA processing. Cleaves double-strand RNA and does not cleave single-strand RNA. Involved in fertility. Required for the function or synthesis of the let-7 miRNA. The sequence is that of Ribonuclease 3 from Caenorhabditis briggsae.